The chain runs to 401 residues: Heat stress transcription factor A-4a (401 aa).

The DNA-binding element occupies 13–107 (LPPFLTKTYE…LMKNIHRRKP (95 aa)). Residues 122 to 188 (PLTDSERVRM…TMVSFVSQVL (67 aa)) are hydrophobic repeat HR-A/B. Residues 207 to 213 (RKRRFPR) carry the Nuclear localization signal motif. The AHA1 motif lies at 256-265 (IAIWENLVSD). Residues 341 to 350 (DGFWQQFFSE) carry the AHA2 motif. Positions 351-373 (NPGSTEQREVQLERKDDKDKAGV) are disordered. The segment covering 356–373 (EQREVQLERKDDKDKAGV) has biased composition (basic and acidic residues). The Nuclear export signal signature appears at 388–395 (ITEQLGHL).

It belongs to the HSF family. Class A subfamily. Homotrimer. Post-translationally, exhibits temperature-dependent phosphorylation.

Its subcellular location is the cytoplasm. The protein resides in the nucleus. Transcriptional activator that specifically binds DNA sequence 5'-AGAAnnTTCT-3' known as heat shock promoter elements (HSE). In Arabidopsis thaliana (Mouse-ear cress), this protein is Heat stress transcription factor A-4a (HSFA4A).